Here is a 366-residue protein sequence, read N- to C-terminus: DNA integrity scanning protein DisA (366 aa).

A DAC domain is found at Val-21–Pro-159. ATP-binding positions include Gly-88, Leu-106, and Thr-119–Ser-123.

Belongs to the DisA family. Homooctamer. Mg(2+) serves as cofactor.

It catalyses the reaction 2 ATP = 3',3'-c-di-AMP + 2 diphosphate. Functionally, participates in a DNA-damage check-point. DisA forms globular foci that rapidly scan along the chromosomes searching for lesions. Also has diadenylate cyclase activity, catalyzing the condensation of 2 ATP molecules into cyclic di-AMP (c-di-AMP). c-di-AMP likely acts as a signaling molecule that may couple DNA integrity with a cellular process. The polypeptide is DNA integrity scanning protein DisA (Corynebacterium glutamicum (strain R)).